Here is a 122-residue protein sequence, read N- to C-terminus: Large ribosomal subunit protein eL18 (122 aa).

It belongs to the eukaryotic ribosomal protein eL18 family.

This chain is Large ribosomal subunit protein eL18, found in Pyrobaculum aerophilum (strain ATCC 51768 / DSM 7523 / JCM 9630 / CIP 104966 / NBRC 100827 / IM2).